Reading from the N-terminus, the 212-residue chain is Large ribosomal subunit protein uL4 (212 aa).

The interval 45-71 is disordered; it reads RQGNASTKTRAEVRGGGRKPWRQKGTG. Basic residues predominate over residues 60-71; it reads GGRKPWRQKGTG.

It belongs to the universal ribosomal protein uL4 family. In terms of assembly, part of the 50S ribosomal subunit.

Functionally, one of the primary rRNA binding proteins, this protein initially binds near the 5'-end of the 23S rRNA. It is important during the early stages of 50S assembly. It makes multiple contacts with different domains of the 23S rRNA in the assembled 50S subunit and ribosome. Forms part of the polypeptide exit tunnel. This chain is Large ribosomal subunit protein uL4, found in Nostoc punctiforme (strain ATCC 29133 / PCC 73102).